The primary structure comprises 570 residues: Alpha-glucosidase (570 aa).

D206 acts as the Nucleophile in catalysis. E263 acts as the Proton donor in catalysis.

It belongs to the glycosyl hydrolase 13 family.

It carries out the reaction Hydrolysis of terminal, non-reducing (1-&gt;4)-linked alpha-D-glucose residues with release of alpha-D-glucose.. The protein is Alpha-glucosidase (MAL2) of Candida albicans (Yeast).